A 309-amino-acid polypeptide reads, in one-letter code: NAD-dependent protein deacylase sirtuin-5A, mitochondrial (309 aa).

Residues 1–35 (MILLTFHTRRLVSHAYCGLKPASQKKSIALEMTRP) constitute a mitochondrion transit peptide. A Deacetylase sirtuin-type domain is found at 36–306 (SSNLADFREA…PPALARHETE (271 aa)). 57–76 (GAGVSAESGVPTFRGAGGYW) is a binding site for NAD(+). Substrate-binding residues include Tyr-101 and Arg-104. 139–142 (QNID) serves as a coordination point for NAD(+). Catalysis depends on His-157, which acts as the Proton acceptor. Zn(2+) contacts are provided by Cys-165, Cys-168, Cys-206, and Cys-211. NAD(+) is bound by residues 248–250 (GTS), 274–276 (NME), and Cys-292.

The protein belongs to the sirtuin family. Class III subfamily. Zn(2+) serves as cofactor.

It is found in the mitochondrion. It localises to the cytoplasm. The protein resides in the cytosol. Its subcellular location is the nucleus. The catalysed reaction is N(6)-malonyl-L-lysyl-[protein] + NAD(+) + H2O = 2''-O-malonyl-ADP-D-ribose + nicotinamide + L-lysyl-[protein]. It catalyses the reaction N(6)-succinyl-L-lysyl-[protein] + NAD(+) + H2O = 2''-O-succinyl-ADP-D-ribose + nicotinamide + L-lysyl-[protein]. It carries out the reaction N(6)-glutaryl-L-lysyl-[protein] + NAD(+) + H2O = 2''-O-glutaryl-ADP-D-ribose + nicotinamide + L-lysyl-[protein]. In terms of biological role, NAD-dependent lysine demalonylase, desuccinylase and deglutarylase that specifically removes malonyl, succinyl and glutaryl groups on target proteins. Has weak NAD-dependent protein deacetylase activity; however this activity may not be physiologically relevant in vivo. In Xenopus laevis (African clawed frog), this protein is NAD-dependent protein deacylase sirtuin-5A, mitochondrial (sirt5-a).